The primary structure comprises 355 residues: Peptide chain release factor 1 (355 aa).

At Gln-233 the chain carries N5-methylglutamine. A compositionally biased stretch (basic and acidic residues) spans 280–293 (ERRKKEQERADSRR). The tract at residues 280-308 (ERRKKEQERADSRRGQVGSGDRSERIRTY) is disordered.

This sequence belongs to the prokaryotic/mitochondrial release factor family. In terms of processing, methylated by PrmC. Methylation increases the termination efficiency of RF1.

The protein localises to the cytoplasm. In terms of biological role, peptide chain release factor 1 directs the termination of translation in response to the peptide chain termination codons UAG and UAA. The sequence is that of Peptide chain release factor 1 from Rickettsia felis (strain ATCC VR-1525 / URRWXCal2) (Rickettsia azadi).